A 210-amino-acid chain; its full sequence is Large ribosomal subunit protein bL25 (210 aa).

The tract at residues 186–210 (ISSASTEKEAESNQESTSTTPSSES) is disordered. The span at 198 to 210 (NQESTSTTPSSES) shows a compositional bias: low complexity.

The protein belongs to the bacterial ribosomal protein bL25 family. CTC subfamily. Part of the 50S ribosomal subunit; part of the 5S rRNA/L5/L18/L25 subcomplex. Contacts the 5S rRNA. Binds to the 5S rRNA independently of L5 and L18.

This is one of the proteins that binds to the 5S RNA in the ribosome where it forms part of the central protuberance. This chain is Large ribosomal subunit protein bL25, found in Ehrlichia chaffeensis (strain ATCC CRL-10679 / Arkansas).